The primary structure comprises 405 residues: MTTFDHPSMIRQPKPTGLAGGLVLAALMLSSSLALADATPNQLGSEITAKLQDETSIAIAPASDSKRVYVLDPGNFHMTSTVYTIDGKSSKLLGMTDAGKLPNVMVASDGKFLAIANTMYSRVARGKRDDYLELIDTKTHQPIADIDIPEGRFLTGVFERTAGLSVDDKHLLFQQFSPSPGVGLVDLQQKAFVKIMNVPDCYHIFPTANQNFFMHCRDGSLMQFTYDSKGNTKQKPTKIFHAEKEYLLNNPYYSNSNNHLTWPTYEGKIFQAKLSESGAEFLKPIEVFTDKEKADKWRPGGWQTIAFHKARNELYLLADQREKWTHKLPSRFVFVVDATSGKRLRRIELKHEINSIAVSQDDKPYLYAVSEEAKTLFTFDAVNGKALSSIDELGRAPSMIFIADK.

An N-terminal signal peptide occupies residues 1–36 (MTTFDHPSMIRQPKPTGLAGGLVLAALMLSSSLALA).

It belongs to the aromatic amine dehydrogenase heavy chain family. In terms of assembly, tetramer of two light and two heavy chains.

It is found in the periplasm. It carries out the reaction 2 oxidized [amicyanin] + methylamine + H2O = 2 reduced [amicyanin] + formaldehyde + NH4(+) + 2 H(+). Its function is as follows. Methylamine dehydrogenase carries out the oxidation of methylamine. Electrons are passed from methylamine dehydrogenase to amicyanin. The protein is Methylamine dehydrogenase heavy chain (mauB) of Methylophilus methylotrophus (Bacterium W3A1).